A 95-amino-acid polypeptide reads, in one-letter code: Neutrophil antibiotic peptide NP-4 (95 aa).

The first 19 residues, 1 to 19 (MRTLALLAAILLVTLQAQA), serve as a signal peptide directing secretion. Positions 20-62 (ELHSGMADDGVDQQQPRAQDLDVAVYIKQDETSPLEVLGAKAG) are excised as a propeptide. 3 disulfide bridges follow: Cys65-Cys93, Cys67-Cys82, and Cys72-Cys92.

The protein belongs to the alpha-defensin family.

The protein resides in the secreted. In terms of biological role, microbicidal activity. The chain is Neutrophil antibiotic peptide NP-4 from Oryctolagus cuniculus (Rabbit).